The chain runs to 514 residues: Peptide chain release factor 3 (514 aa).

The tr-type G domain maps to 8-268; the sequence is KKRRTFAIIS…IFLKFAPEPH (261 aa). GTP is bound by residues 17–24, 85–89, and 139–142; these read SHPDAGKT, DTPGH, and NKLD.

It belongs to the TRAFAC class translation factor GTPase superfamily. Classic translation factor GTPase family. PrfC subfamily.

Its subcellular location is the cytoplasm. Functionally, increases the formation of ribosomal termination complexes and stimulates activities of RF-1 and RF-2. It binds guanine nucleotides and has strong preference for UGA stop codons. It may interact directly with the ribosome. The stimulation of RF-1 and RF-2 is significantly reduced by GTP and GDP, but not by GMP. The protein is Peptide chain release factor 3 of Streptococcus pneumoniae (strain CGSP14).